The primary structure comprises 562 residues: TBC1 domain family member 24 (562 aa).

Residues Lys36, Arg40, Lys238, Arg242, and 293 to 297 (RLFSR) each bind a 1,2-diacyl-sn-glycero-3-phospho-(1D-myo-inositol). A Rab-GAP TBC domain is found at 42–259 (GHWAKSHSLR…FFHKVRGGQP (218 aa)). The region spanning 337-549 (EIVSVKEMRD…ISIIEVWGFK (213 aa)) is the TLDc domain. Residues 451-464 (ASSGDNDANSSQSA) are compositionally biased toward low complexity. Positions 451-471 (ASSGDNDANSSQSAKDGIDPS) are disordered.

Interacts with ARF6.

The protein resides in the cell membrane. It is found in the cytoplasm. The protein localises to the cytoplasmic vesicle membrane. It localises to the presynapse. Functionally, may act as a GTPase-activating protein for Rab family protein(s). Involved in neuronal projections development, probably through a negative modulation of ARF6 function. Involved in the regulation of synaptic vesicle trafficking. The protein is TBC1 domain family member 24 (tbc1d24) of Xenopus tropicalis (Western clawed frog).